A 319-amino-acid polypeptide reads, in one-letter code: MTAVARSSLRSTLEPKSFGRVAVLFGGKSAEREVSLNSGNAVLKALLDAGVDAFGIDVGDDFLQRLVSEKIDRAFIVLHGRGGEDGTMQGLLECLEIPYTGSGVLASALAMDKLRTKQVWQSLGPATPLHAVLENENDCICAATELGFPLIVKPAHEGSSIGMAKVNSVDELIAAWKAASTYDSQVLVEQWIQGPEFTVASLRGQVLPPIGLGTPHSFYDYDAKYLASDTQYRIPCGLDDAQEQQLKQLAARACDAIGIAGWARTDVMQDAEGKFWLLEVNTVPGMTDHSLVPMAARAAGLNFQQLVLAILADSVQARG.

An ATP-grasp domain is found at 117 to 312 (KQVWQSLGPA…FQQLVLAILA (196 aa)). Position 143 to 198 (143 to 198 (ATELGFPLIVKPAHEGSSIGMAKVNSVDELIAAWKAASTYDSQVLVEQWIQGPEFT)) interacts with ATP. Mg(2+)-binding residues include Asp-266, Glu-279, and Asn-281.

This sequence belongs to the D-alanine--D-alanine ligase family. Requires Mg(2+) as cofactor. The cofactor is Mn(2+).

It localises to the cytoplasm. It catalyses the reaction 2 D-alanine + ATP = D-alanyl-D-alanine + ADP + phosphate + H(+). It participates in cell wall biogenesis; peptidoglycan biosynthesis. In terms of biological role, cell wall formation. This is D-alanine--D-alanine ligase B from Pseudomonas syringae pv. tomato (strain ATCC BAA-871 / DC3000).